The following is a 465-amino-acid chain: Cruciform DNA-recognizing protein 1 (465 aa).

Disordered regions lie at residues 107–227 (EAGG…VPNP) and 247–275 (RLNK…PALP). The span at 127–151 (NRKKNKRNNKKRKSKLKKKSTKNNK) shows a compositional bias: basic residues. 2 positions are modified to phosphoserine: Ser153 and Ser156. The span at 156–165 (SXDDNEEEDX) shows a compositional bias: acidic residues. Positions 160–161 (NE) are X-DNA-binding. The segment covering 166 to 177 (VTGTTTEDVTGT) has biased composition (low complexity). Thr182 carries the phosphothreonine modification. Phosphoserine is present on Ser271. At Thr295 the chain carries Phosphothreonine. The tract at residues 312–465 (PTPEAQISIP…FFGKLKKLFK (154 aa)) is disordered. Ser319 and Ser343 each carry phosphoserine. Over residues 337-363 (LVEKRESTEGVSDGSKKVENKAKKDEE) the composition is skewed to basic and acidic residues. The residue at position 366 (Thr366) is a Phosphothreonine. Composition is skewed to basic and acidic residues over residues 385-398 (AEGR…EEKE) and 404-428 (EKGS…EVKK). A Phosphoserine modification is found at Ser394. Ser440 carries the phosphoserine modification. Basic residues predominate over residues 451-465 (KKKTGFFGKLKKLFK).

The protein belongs to the CRP1/MDG1 family. In terms of processing, cleaved in the vicinity of position 160 to give an X-DNA-binding N-terminal subpeptide and a non-DNA-binding C-terminal subpeptide.

Functionally, cruciform DNA-binding protein which exerts an enhancing effect on the cleavage of cruciform DNA (X-DNA) by endonuclease VII from bacteriophage T4. This is Cruciform DNA-recognizing protein 1 (CRP1) from Saccharomyces cerevisiae (strain FostersB) (Baker's yeast).